The primary structure comprises 339 residues: 3-isopropylmalate dehydrogenase (339 aa).

Residues Arg87, Arg97, Arg124, and Asp214 each coordinate substrate. Mg(2+) contacts are provided by Asp214, Asp238, and Asp242. 274–286 lines the NAD(+) pocket; that stretch reads GSAPDIAGQGIAD.

This sequence belongs to the isocitrate and isopropylmalate dehydrogenases family. LeuB type 2 subfamily. Homodimer. It depends on Mg(2+) as a cofactor. Mn(2+) is required as a cofactor.

Its subcellular location is the cytoplasm. The catalysed reaction is (2R,3S)-3-isopropylmalate + NAD(+) = 4-methyl-2-oxopentanoate + CO2 + NADH. The protein operates within amino-acid biosynthesis; L-leucine biosynthesis; L-leucine from 3-methyl-2-oxobutanoate: step 3/4. Functionally, catalyzes the oxidation of 3-carboxy-2-hydroxy-4-methylpentanoate (3-isopropylmalate) to 3-carboxy-4-methyl-2-oxopentanoate. The product decarboxylates to 4-methyl-2 oxopentanoate. This Mycobacterium marinum (strain ATCC BAA-535 / M) protein is 3-isopropylmalate dehydrogenase.